The following is a 362-amino-acid chain: Phosphoserine aminotransferase (362 aa).

Ser-9 and Arg-42 together coordinate L-glutamate. Residues 76-77 (GR), Trp-102, Thr-153, Asp-174, and Gln-197 each bind pyridoxal 5'-phosphate. Lys-198 carries the post-translational modification N6-(pyridoxal phosphate)lysine. 239-240 (NT) provides a ligand contact to pyridoxal 5'-phosphate.

Belongs to the class-V pyridoxal-phosphate-dependent aminotransferase family. SerC subfamily. As to quaternary structure, homodimer. The cofactor is pyridoxal 5'-phosphate.

The protein resides in the cytoplasm. The catalysed reaction is O-phospho-L-serine + 2-oxoglutarate = 3-phosphooxypyruvate + L-glutamate. The enzyme catalyses 4-(phosphooxy)-L-threonine + 2-oxoglutarate = (R)-3-hydroxy-2-oxo-4-phosphooxybutanoate + L-glutamate. It functions in the pathway amino-acid biosynthesis; L-serine biosynthesis; L-serine from 3-phospho-D-glycerate: step 2/3. It participates in cofactor biosynthesis; pyridoxine 5'-phosphate biosynthesis; pyridoxine 5'-phosphate from D-erythrose 4-phosphate: step 3/5. Its function is as follows. Catalyzes the reversible conversion of 3-phosphohydroxypyruvate to phosphoserine and of 3-hydroxy-2-oxo-4-phosphonooxybutanoate to phosphohydroxythreonine. The protein is Phosphoserine aminotransferase of Citrobacter koseri (strain ATCC BAA-895 / CDC 4225-83 / SGSC4696).